A 301-amino-acid chain; its full sequence is MNPAVDNEFQQWLSQINQVCGNFTGRLLTERYTGVLDTHFAKGLKLSTVTTSGVNLSRTWQEVKGSDDAWFYTVFQLSGQAIMEQDERQVQIGAGDITLLDASRPCSLYWQESSKQISLLLPRTLLEQYFPHQKPICAERLDADLPMVQLSHRLLQESMNNPALSETESEAALQAMVCLLRPVLHQRESVQPRRERQFQKVVTLIDDNIREEILRPEWIAGETGMSVRSLYRMFADKGLVVAQYIRNRRLDFCADAIRHAADDEKLAGIGFHWGFSDQSHFSTVFKQRFGMTPGEYRRKFR.

The 101-residue stretch at 199-299 (QKVVTLIDDN…GMTPGEYRRK (101 aa)) folds into the HTH araC/xylS-type domain. 2 DNA-binding regions (H-T-H motif) span residues 217-238 (EWIA…ADKG) and 266-289 (LAGI…KQRF).

In terms of biological role, positive regulator of tynA/maoA and feaB/padA, the genes for 2-phenylethylamine catabolism. The polypeptide is Transcriptional activator FeaR (feaR) (Escherichia coli (strain K12)).